Reading from the N-terminus, the 158-residue chain is Large ribosomal subunit protein bL21 (158 aa).

The tract at residues 106 to 158 (SKPKKAAAKPIKEEATAAKGTKDTAVEKKAEKTAEKKTASQKKAAVASKSKKD) is disordered. Residues 115-143 (PIKEEATAAKGTKDTAVEKKAEKTAEKKT) show a composition bias toward basic and acidic residues. The segment covering 146 to 158 (QKKAAVASKSKKD) has biased composition (low complexity).

Belongs to the bacterial ribosomal protein bL21 family. In terms of assembly, part of the 50S ribosomal subunit. Contacts protein L20.

Functionally, this protein binds to 23S rRNA in the presence of protein L20. In Bartonella tribocorum (strain CIP 105476 / IBS 506), this protein is Large ribosomal subunit protein bL21.